Here is a 499-residue protein sequence, read N- to C-terminus: Lysosomal Pro-X carboxypeptidase (499 aa).

A signal peptide spans 1–21 (MGRCSLLLLLLLIAFLTPGAA). Positions 22–47 (NPVSPSLRAPSSLPWSTSFRSRPTIT) are excised as a propeptide. N-linked (GlcNAc...) asparagine glycosylation is present at asparagine 103. Catalysis depends on serine 181, which acts as the Charge relay system. The segment at 196-337 (HLVVGALASS…QNIFQALNVY (142 aa)) is SKS domain. Intrachain disulfides connect cysteine 217-cysteine 375, cysteine 235-cysteine 313, cysteine 266-cysteine 346, and cysteine 367-cysteine 397. Asparagine 234 carries an N-linked (GlcNAc...) asparagine glycan. 2 N-linked (GlcNAc...) asparagine glycosylation sites follow: asparagine 339 and asparagine 348. The N-linked (GlcNAc...) asparagine glycan is linked to asparagine 418. Active-site charge relay system residues include aspartate 433 and histidine 458.

It belongs to the peptidase S28 family. As to quaternary structure, homodimer.

The protein localises to the lysosome. The catalysed reaction is Cleavage of a -Pro-|-Xaa bond to release a C-terminal amino acid.. Its function is as follows. Cleaves C-terminal amino acids linked to proline in peptides such as angiotensin II, III and des-Arg9-bradykinin. This cleavage occurs at acidic pH, but enzymatic activity is retained with some substrates at neutral pH. This is Lysosomal Pro-X carboxypeptidase (PRCP) from Bos taurus (Bovine).